A 261-amino-acid chain; its full sequence is ATP synthase subunit a (261 aa).

A run of 5 helical transmembrane segments spans residues 28 to 48 (AVHLDSLGWSVFLGLVFLTIF), 89 to 109 (IAPLSLTIFVWILLMNSMDWV), 140 to 160 (NITFGLALGVFILIIYYSIKV), 203 to 223 (LFGNLYAGELIFLLIATIGVF), and 229 to 249 (FLWAAFHLLVIPLQAFIFMML).

It belongs to the ATPase A chain family. In terms of assembly, F-type ATPases have 2 components, CF(1) - the catalytic core - and CF(0) - the membrane proton channel. CF(1) has five subunits: alpha(3), beta(3), gamma(1), delta(1), epsilon(1). CF(0) has three main subunits: a(1), b(2) and c(9-12). The alpha and beta chains form an alternating ring which encloses part of the gamma chain. CF(1) is attached to CF(0) by a central stalk formed by the gamma and epsilon chains, while a peripheral stalk is formed by the delta and b chains.

Its subcellular location is the cell inner membrane. Functionally, key component of the proton channel; it plays a direct role in the translocation of protons across the membrane. In Colwellia psychrerythraea (strain 34H / ATCC BAA-681) (Vibrio psychroerythus), this protein is ATP synthase subunit a.